The sequence spans 1044 residues: Diacylglycerol lipase-alpha (1044 aa).

Over 1–22 (MPGIVVFRRRWSVGSDDLVLPA) the chain is Cytoplasmic. The helical transmembrane segment at 23 to 43 (IFLFLLHTTWFVILSVVLFGL) threads the bilayer. The Extracellular segment spans residues 44 to 60 (VYNPHEACSLNLVDHGR). A helical membrane pass occupies residues 61–81 (GYLGILLSCMIAEMAIIWLSM). The Cytoplasmic segment spans residues 82–101 (RGGILYTEPRDSMQYVLYVR). A helical membrane pass occupies residues 102-122 (LAILVIEFIYAIVGIVWLTQY). The Extracellular segment spans residues 123 to 136 (YTSCNDLTAKNVTL). N133 is a glycosylation site (N-linked (GlcNAc...) asparagine). The helical transmembrane segment at 137–157 (GMVVCNWVVILSVCITVLCVF) threads the bilayer. Over 158–1044 (DPTGRTFVKL…KQDDLVISAR (887 aa)) the chain is Cytoplasmic. Active-site charge relay system residues include S472 and D524. Phosphoserine occurs at positions 728, 730, 733, 744, 784, 786, 808, 810, 835, 849, and 954. Residues 848-897 (LSKHSQDTQPLEAALGSGGVTPERPPSATIEEEEAAGGSEGGGVAPRGEL) form a disordered region. The interval 1013 to 1044 (QECLATDKIRTSTPTGHGASPTKQDDLVISAR) is disordered. T1025 is modified (phosphothreonine).

The protein belongs to the AB hydrolase superfamily. Lipase family. Interacts (via C-terminal) with CAMK2A; leading to the phosphorylation and inhibition of DAGLA enzymatic activity. Interacts (via PPXXF motif) with HOMER1 and HOMER2; this interaction is required for DAGLA membrane localization. The cofactor is Ca(2+). Phosphorylated at Ser-784 and Ser-810 by CAMK2A; phosphorylation by CAMK2A inhibits diacylglycerol lipase activity. Highly expressed by principal cells in the hippocampus. In embryonic brains, it is present in axonal tracts, while in adults it localizes to dendritic fields, correlating with the developmental change in requirement for 2-AG synthesis from the pre- to the postsynaptic compartment. Concentrated in heads of dendritic spines throughout the hippocampal formation. Highly compartmentalized into a wide perisynaptic annulus around the postsynaptic density of axospinous contacts but not intrasynaptically (at protein level).

It is found in the cell membrane. Its subcellular location is the cell projection. It localises to the dendritic spine membrane. The protein localises to the postsynaptic density membrane. The protein resides in the early endosome membrane. The catalysed reaction is a 1,2-diacyl-sn-glycerol + H2O = a 2-acylglycerol + a fatty acid + H(+). It catalyses the reaction 1-octadecanoyl-2-(5Z,8Z,11Z,14Z-eicosatetraenoyl)-sn-glycerol + H2O = 2-(5Z,8Z,11Z,14Z-eicosatetraenoyl)-glycerol + octadecanoate + H(+). The enzyme catalyses 1,2-di-(9Z-octadecenoyl)-sn-glycerol + H2O = 2-(9Z-octadecenoyl)-glycerol + (9Z)-octadecenoate + H(+). It carries out the reaction 1-(9Z-octadecenoyl)-2-(5Z,8Z,11Z,14Z-eicosatetraenoyl)-sn-glycerol + H2O = 2-(5Z,8Z,11Z,14Z-eicosatetraenoyl)-glycerol + (9Z)-octadecenoate + H(+). The catalysed reaction is 1-(9Z-octadecenoyl)-2-octadecanoyl-sn-glycerol + H2O = 2-octadecanoylglycerol + (9Z)-octadecenoate + H(+). It catalyses the reaction 1-(9Z-octadecenoyl)-2-(9Z,12Z-octadecadienoyl)-sn-glycerol + H2O = 2-(9Z,12Z-octadecadienoyl)-glycerol + (9Z)-octadecenoate + H(+). The enzyme catalyses 1-(9Z-octadecenoyl)-2-O-(5Z,8Z,11Z,14Z-eicosatetraenyl)-sn-glycerol + H2O = 2-O-(5Z,8Z,11Z,14Z)-eicosatetraenylglycerol + (9Z)-octadecenoate + H(+). Inhibited by 1,2,3-triazole urea covalent inhibitor KT172, DH376 and DO34. Inhibited by p-hydroxy-mercuri-benzoate and HgCl(2), but not to PMSF. Also inhibited by RHC80267. Diacylglycerol lipase activity is inhibited by the phosphorylation of Ser-784 and Ser-810 by CAMK2A. In terms of biological role, serine hydrolase that hydrolyzes arachidonic acid-esterified diacylglycerols (DAGs) to produce the principal endocannabinoid (eCB), 2-arachidonoylglycerol (2-AG). Preferentially hydrolyzes sn-1 fatty acids from diacylglycerols (DAG) that contain arachidonic acid (AA) esterified at the sn-2 position to biosynthesize 2-AG. Has negligible activity against other lipids including monoacylglycerols and phospholipids. Plays a key role in regulating 2-AG signaling in the central nervous system (CNS). Controls the activity of 2-AG as a retrograde messenger at neuronal synapses. Supports axonal growth during development and adult neurogenesis. Plays a role for eCB signaling in the physiological regulation of anxiety and depressive behaviors. Also regulates neuroinflammatory responses in the brain, in particular, LPS-induced microglial activation. This is Diacylglycerol lipase-alpha (Dagla) from Mus musculus (Mouse).